The following is a 254-amino-acid chain: Imidazole glycerol phosphate synthase subunit HisF (254 aa).

Residues Asp12 and Asp131 contribute to the active site.

It belongs to the HisA/HisF family. In terms of assembly, heterodimer of HisH and HisF.

Its subcellular location is the cytoplasm. The enzyme catalyses 5-[(5-phospho-1-deoxy-D-ribulos-1-ylimino)methylamino]-1-(5-phospho-beta-D-ribosyl)imidazole-4-carboxamide + L-glutamine = D-erythro-1-(imidazol-4-yl)glycerol 3-phosphate + 5-amino-1-(5-phospho-beta-D-ribosyl)imidazole-4-carboxamide + L-glutamate + H(+). It functions in the pathway amino-acid biosynthesis; L-histidine biosynthesis; L-histidine from 5-phospho-alpha-D-ribose 1-diphosphate: step 5/9. Functionally, IGPS catalyzes the conversion of PRFAR and glutamine to IGP, AICAR and glutamate. The HisF subunit catalyzes the cyclization activity that produces IGP and AICAR from PRFAR using the ammonia provided by the HisH subunit. The polypeptide is Imidazole glycerol phosphate synthase subunit HisF (Janthinobacterium sp. (strain Marseille) (Minibacterium massiliensis)).